A 241-amino-acid chain; its full sequence is Large ribosomal subunit protein uL1 (241 aa).

Belongs to the universal ribosomal protein uL1 family. In terms of assembly, part of the 50S ribosomal subunit.

Binds directly to 23S rRNA. The L1 stalk is quite mobile in the ribosome, and is involved in E site tRNA release. In terms of biological role, protein L1 is also a translational repressor protein, it controls the translation of the L11 operon by binding to its mRNA. The polypeptide is Large ribosomal subunit protein uL1 (Streptomyces coelicolor (strain ATCC BAA-471 / A3(2) / M145)).